The sequence spans 275 residues: Envelope glycoprotein (275 aa).

Intrachain disulfides connect cysteine 1/cysteine 10, cysteine 18/cysteine 27, and cysteine 58/cysteine 62. Residue asparagine 122 is glycosylated (N-linked (GlcNAc...) asparagine; by host). Disulfide bonds link cysteine 164-cysteine 194, cysteine 187-cysteine 239, cysteine 204-cysteine 209, and cysteine 240-cysteine 245.

It belongs to the hantavirus envelope glycoprotein family. As to quaternary structure, homodimer. Homotetramer; forms heterotetrameric Gn-Gc spikes in the pre-fusion conformation. Homotrimer; forms homotrimer in the post-fusion conformation at acidic pH. Interacts (via C-terminus) with the nucleoprotein. Post-translationally, envelope polyprotein precursor is quickly cleaved in vivo just after synthesis, presumably by host signal peptidase.

Its subcellular location is the virion membrane. The protein resides in the host cell surface. The protein localises to the host Golgi apparatus membrane. It localises to the host endoplasmic reticulum membrane. Forms homotetramers with glycoprotein N at the surface of the virion. Attaches the virion to host cell receptors including integrin ITGAV/ITGB3. This attachment induces virion internalization predominantly through clathrin-dependent endocytosis. Class II fusion protein that promotes fusion of viral membrane with host endosomal membrane after endocytosis of the virion. The polypeptide is Envelope glycoprotein (GP) (Homo sapiens (Human)).